The following is a 244-amino-acid chain: Cell division protein ZapD (244 aa).

It belongs to the ZapD family. In terms of assembly, interacts with FtsZ.

Its subcellular location is the cytoplasm. In terms of biological role, cell division factor that enhances FtsZ-ring assembly. Directly interacts with FtsZ and promotes bundling of FtsZ protofilaments, with a reduction in FtsZ GTPase activity. The sequence is that of Cell division protein ZapD from Shewanella sp. (strain MR-4).